The primary structure comprises 242 residues: RNA polymerase sigma factor for flagellar operon (242 aa).

The Polymerase core binding signature appears at 55–68 (DMQQIGLIALVEAG). A DNA-binding region (H-T-H motif) is located at residues 211–230 (LHEIALVLDLTPPRICQLHK).

This sequence belongs to the sigma-70 factor family.

Its function is as follows. Sigma factors are initiation factors that promote the attachment of RNA polymerase to specific initiation sites and are then released. This alternative sigma factor is specific for the flagellin gene (fliC) expression. This chain is RNA polymerase sigma factor for flagellar operon (lafS), found in Vibrio parahaemolyticus serotype O3:K6 (strain RIMD 2210633).